An 84-amino-acid polypeptide reads, in one-letter code: Phosphoribosylformylglycinamidine synthase subunit PurS (84 aa).

The protein belongs to the PurS family. In terms of assembly, homodimer. Part of the FGAM synthase complex composed of 1 PurL, 1 PurQ and 2 PurS subunits.

It is found in the cytoplasm. The enzyme catalyses N(2)-formyl-N(1)-(5-phospho-beta-D-ribosyl)glycinamide + L-glutamine + ATP + H2O = 2-formamido-N(1)-(5-O-phospho-beta-D-ribosyl)acetamidine + L-glutamate + ADP + phosphate + H(+). The protein operates within purine metabolism; IMP biosynthesis via de novo pathway; 5-amino-1-(5-phospho-D-ribosyl)imidazole from N(2)-formyl-N(1)-(5-phospho-D-ribosyl)glycinamide: step 1/2. Its function is as follows. Part of the phosphoribosylformylglycinamidine synthase complex involved in the purines biosynthetic pathway. Catalyzes the ATP-dependent conversion of formylglycinamide ribonucleotide (FGAR) and glutamine to yield formylglycinamidine ribonucleotide (FGAM) and glutamate. The FGAM synthase complex is composed of three subunits. PurQ produces an ammonia molecule by converting glutamine to glutamate. PurL transfers the ammonia molecule to FGAR to form FGAM in an ATP-dependent manner. PurS interacts with PurQ and PurL and is thought to assist in the transfer of the ammonia molecule from PurQ to PurL. The sequence is that of Phosphoribosylformylglycinamidine synthase subunit PurS from Methanothermobacter thermautotrophicus (strain ATCC 29096 / DSM 1053 / JCM 10044 / NBRC 100330 / Delta H) (Methanobacterium thermoautotrophicum).